The primary structure comprises 809 residues: Bifunctional enzyme MurC/Ddl (809 aa).

Positions Met-1–Lys-450 are UDP-N-acetylmuramate--alanine ligase. ATP contacts are provided by residues Gly-111–Gly-117 and Ile-606–Ile-661. The interval Lys-451–Arg-809 is D-alanine--D-alanine ligase. In terms of domain architecture, ATP-grasp spans Lys-573–Ile-784. Residues Asp-738, Glu-751, and Asn-753 each contribute to the Mg(2+) site.

This sequence in the N-terminal section; belongs to the MurCDEF family. In the C-terminal section; belongs to the D-alanine--D-alanine ligase family. It depends on Mg(2+) as a cofactor. Mn(2+) is required as a cofactor.

Its subcellular location is the cytoplasm. The enzyme catalyses UDP-N-acetyl-alpha-D-muramate + L-alanine + ATP = UDP-N-acetyl-alpha-D-muramoyl-L-alanine + ADP + phosphate + H(+). The catalysed reaction is 2 D-alanine + ATP = D-alanyl-D-alanine + ADP + phosphate + H(+). It functions in the pathway cell wall biogenesis; peptidoglycan biosynthesis. In terms of biological role, cell wall formation. This Chlamydia pneumoniae (Chlamydophila pneumoniae) protein is Bifunctional enzyme MurC/Ddl (murC/ddl).